The primary structure comprises 224 residues: MNPAWALLRLASPQLPIGGYSYSQGLEMAVDNGRVDSPDSARRWISDQLLLNLARFEAPLLLAHCQAAADEHWDELRKLCESHRASRETRELHLESRQMGYSLQQLLNGLPELDQPARDFLEHCAEPHLALCWALAARAWQISPQDALAAWLWSWLENQLAVLMKTLPLGQQAAQRLTSELLPLLQQAQQDATRINPEHLGSAAFGLSLACMAHERQYSRLFRS.

The protein belongs to the UreF family. UreD, UreF and UreG form a complex that acts as a GTP-hydrolysis-dependent molecular chaperone, activating the urease apoprotein by helping to assemble the nickel containing metallocenter of UreC. The UreE protein probably delivers the nickel.

It is found in the cytoplasm. Functionally, required for maturation of urease via the functional incorporation of the urease nickel metallocenter. This Pseudomonas fluorescens (strain Pf0-1) protein is Urease accessory protein UreF.